A 177-amino-acid polypeptide reads, in one-letter code: Large ribosomal subunit protein uL6 (177 aa).

Belongs to the universal ribosomal protein uL6 family. In terms of assembly, part of the 50S ribosomal subunit.

In terms of biological role, this protein binds to the 23S rRNA, and is important in its secondary structure. It is located near the subunit interface in the base of the L7/L12 stalk, and near the tRNA binding site of the peptidyltransferase center. This Cupriavidus metallidurans (strain ATCC 43123 / DSM 2839 / NBRC 102507 / CH34) (Ralstonia metallidurans) protein is Large ribosomal subunit protein uL6.